Consider the following 764-residue polypeptide: Thyrotropin receptor (764 aa).

The N-terminal stretch at 1–20 (MRPPPLLHLALLLALPRSLG) is a signal peptide. Over 21 to 413 (GKGCPSPPCE…EFNPCEDIMG (393 aa)) the chain is Extracellular. Cysteine 31 and cysteine 41 are oxidised to a cystine. N-linked (GlcNAc...) asparagine glycans are attached at residues asparagine 77 and asparagine 99. 6 LRR repeats span residues 125–149 (LPLLKFLGIFNTGLGVFPDVTKVYS), 150–174 (TDVFFILEITDNPYMASIPANAFQG), 176–199 (CNETLTLKLYNNGFTSIQGHAFNG), 201–223 (KLDAVYLNKNKYLSAIDKDAFGG), 225–248 (YSGPTLLDVSYTSVTALPSKGLEH), and 250–271 (KELIARNTWTLKKLPLSLSFLH). N-linked (GlcNAc...) asparagine glycosylation is found at asparagine 177 and asparagine 198. A glycan (N-linked (GlcNAc...) asparagine) is linked at asparagine 302. At tyrosine 385 the chain carries Sulfotyrosine. Residues 414 to 441 (YKFLRIVVWFVSLLALLGNVFVLIVLLT) traverse the membrane as a helical segment. The Cytoplasmic segment spans residues 442 to 450 (SHYKLTVPR). Residues 451 to 473 (FLMCNLAFADFCMGMYLLLIASV) traverse the membrane as a helical segment. Topologically, residues 474–494 (DLYTHSEYYNHAIDWQTGPGC) are extracellular. The cysteines at positions 494 and 569 are disulfide-linked. A helical transmembrane segment spans residues 495-517 (NTAGFFTVFASELSVYTLTVITL). The Cytoplasmic segment spans residues 518 to 537 (ERWYAITFAMRLDRKIRLRH). Residues 538-560 (AYAIMVGGWVCCFLLALLPLVGI) form a helical membrane-spanning segment. Topologically, residues 561-580 (SSYAKVSICLPMDTETPLAL) are extracellular. The helical transmembrane segment at 581–602 (AYIILVLLLNIVAFIIVCSCYV) threads the bilayer. Residues 603-625 (KIYITVRNPQYNPGDKDTKIAKR) lie on the Cytoplasmic side of the membrane. Residues 626 to 649 (MAVLIFTDFMCMAPISFYALSALM) form a helical membrane-spanning segment. The Extracellular portion of the chain corresponds to 650 to 660 (NKPLITVTNSK). A helical membrane pass occupies residues 661–682 (ILLVLFYPLNSCANPFLYAIFT). Topologically, residues 683–764 (KAFQRDVFIL…ISKEYNQTVL (82 aa)) are cytoplasmic. Residues 762 to 764 (TVL) carry the PDZ-binding motif.

This sequence belongs to the G-protein coupled receptor 1 family. FSH/LSH/TSH subfamily. As to quaternary structure, interacts with heterodimer GPHA2:GPHB5; this interaction stimulates cAMP production. Interacts (via the PDZ-binding motif) with SCRIB; regulates TSHR trafficking and function. In terms of processing, glycosylated. Sulfated. Sulfation on Tyr-385 plays a role in thyrotropin receptor binding and activation.

It is found in the cell membrane. It localises to the basolateral cell membrane. Its function is as follows. Receptor for the thyroid-stimulating hormone (TSH) or thyrotropin. Also acts as a receptor for the heterodimeric glycoprotein hormone (GPHA2:GPHB5) or thyrostimulin. The activity of this receptor is mediated by G proteins which activate adenylate cyclase. Plays a central role in controlling thyroid cell metabolism. This is Thyrotropin receptor (TSHR) from Canis lupus familiaris (Dog).